Here is a 200-residue protein sequence, read N- to C-terminus: LIM domain-containing protein WLIM2a (200 aa).

LIM zinc-binding domains follow at residues 8–68 and 107–167; these read QKCR…LFKE and DKCA…LFKE.

Interacts with F-actin. Expressed in roots, leaves, stems, flowers and siliques. Barely detected in pollen.

It localises to the cytoplasm. The protein resides in the cytoskeleton. Binds to actin filaments and promotes cross-linking into thick bundles. Has an actin-stabilizing activity. The actin regulatory activities are not regulated by pH and [Ca(2+)]. The chain is LIM domain-containing protein WLIM2a from Arabidopsis thaliana (Mouse-ear cress).